A 31-amino-acid polypeptide reads, in one-letter code: Nemertide alpha-6 (31 aa).

3 disulfide bridges follow: cysteine 2–cysteine 16, cysteine 9–cysteine 20, and cysteine 15–cysteine 26. Residues proline 28 and proline 29 each carry the 4-hydroxyproline modification.

This sequence belongs to the nemertide family. In terms of tissue distribution, confined to the epidermis and to the mucus layer.

The protein resides in the secreted. In terms of biological role, highly potent toxin against both insect and some mammalian sodium channels (Nav). It potently inhibits inactivation of insect sodium channels of B.germanica (BgNav1) (EC(50)=2.6 nM) and also delays the inactivation of mammalian Nav with potent activity on Nav1.1/SCN1A (hNav1.1/SCN1A; EC(50)=7.9 nM, rNav1.2/SCN2A; EC(50)=24.3 nM, rNav1.3/SCN3A; EC(50)=105.6 nM, rNav1.4/SCN4A; EC(50)=46.4 nM, hNav1.5/SCN5A; EC(50)=215.2 nM, mNav1.6/SCN8A; EC(50)=36.3 nM, hNav1.9/SCN9A; EC(50)=97.2 nM). 1 uM is enough to completely inhibits the inactivation, resulting in sustained non-inactivating currents. In addition, the toxin significantly enhances the recovery from inactivation, and the open state is not required for the toxin to interact with the channel. In vivo, injection into brine shrimp (Artemia salina) stops movement or causes death after 24 hours (EC(50)=2.8 uM). This chain is Nemertide alpha-6, found in Lineus sanguineus (Ribbon worm).